Consider the following 570-residue polypeptide: Peptidyl-prolyl cis-trans isomerase FKBP9 (570 aa).

Residues 1-24 (MAFGARGWRRWSLLLLLLWVTGQA) form the signal peptide. 4 consecutive PPIase FKBP-type domains span residues 54–142 (GDFV…VDIW), 166–254 (SDFV…LDLH), 278–365 (GDFL…IDFH), and 389–477 (GDYL…LELV). N-linked (GlcNAc...) asparagine glycans are attached at residues N174, N286, N302, and N397. EF-hand domains follow at residues 488–523 (WNGE…QVAS) and 533–568 (NAEM…TKHD). Residues D501, D503, N505, E507, E512, D546, N548, D550, K552, and E557 each coordinate Ca(2+). The short motif at 567–570 (HDEL) is the Prevents secretion from ER element.

Phosphorylated.

It localises to the endoplasmic reticulum lumen. It carries out the reaction [protein]-peptidylproline (omega=180) = [protein]-peptidylproline (omega=0). Inhibited by FK506. In terms of biological role, PPIases accelerate the folding of proteins during protein synthesis. This Rattus norvegicus (Rat) protein is Peptidyl-prolyl cis-trans isomerase FKBP9 (Fkbp9).